Consider the following 222-residue polypeptide: Urease accessory protein UreF (222 aa).

This sequence belongs to the UreF family. In terms of assembly, ureD, UreF and UreG form a complex that acts as a GTP-hydrolysis-dependent molecular chaperone, activating the urease apoprotein by helping to assemble the nickel containing metallocenter of UreC. The UreE protein probably delivers the nickel.

The protein localises to the cytoplasm. Its function is as follows. Required for maturation of urease via the functional incorporation of the urease nickel metallocenter. The protein is Urease accessory protein UreF of Roseobacter denitrificans (strain ATCC 33942 / OCh 114) (Erythrobacter sp. (strain OCh 114)).